We begin with the raw amino-acid sequence, 354 residues long: Uroporphyrinogen decarboxylase (354 aa).

Substrate-binding positions include 27-31 (RQAGR), Asp77, Tyr154, Ser209, and His327.

It belongs to the uroporphyrinogen decarboxylase family. Homodimer.

The protein resides in the cytoplasm. It carries out the reaction uroporphyrinogen III + 4 H(+) = coproporphyrinogen III + 4 CO2. It participates in porphyrin-containing compound metabolism; protoporphyrin-IX biosynthesis; coproporphyrinogen-III from 5-aminolevulinate: step 4/4. In terms of biological role, catalyzes the decarboxylation of four acetate groups of uroporphyrinogen-III to yield coproporphyrinogen-III. The chain is Uroporphyrinogen decarboxylase from Shewanella frigidimarina (strain NCIMB 400).